Consider the following 631-residue polypeptide: Acurin A biosynthesis cluster transcription regulator (631 aa).

The segment covering 1-11 (MSPNMSLTASH) has biased composition (polar residues). The interval 1–28 (MSPNMSLTASHPQQPQPTPQSKAQLTRQ) is disordered. Residues 30–62 (CNRCHASKLKCLRPPGVTTSKSCIRCIKADTEC) constitute a DNA-binding region (zn(2)-C6 fungal-type). Disordered stretches follow at residues 64–141 (YDPP…PDNR), 489–522 (CSSS…HPAT), and 536–573 (HSSS…YPTP). Over residues 88 to 99 (IEAREPEVTDPR) the composition is skewed to basic and acidic residues. Polar residues predominate over residues 119–128 (NGSLAPSSAA).

Its subcellular location is the nucleus. Its function is as follows. Transcription factor that positively regulates the expression of the cluster that mediates the biosynthesis of acurin A, a highly reduced polyketide coupled to a serine via a peptide bond. This is Acurin A biosynthesis cluster transcription regulator from Aspergillus aculeatus (strain ATCC 16872 / CBS 172.66 / WB 5094).